The following is a 493-amino-acid chain: Guanosine-5'-triphosphate,3'-diphosphate pyrophosphatase (493 aa).

Belongs to the GppA/Ppx family. GppA subfamily.

The enzyme catalyses guanosine 3'-diphosphate 5'-triphosphate + H2O = guanosine 3',5'-bis(diphosphate) + phosphate + H(+). The protein operates within purine metabolism; ppGpp biosynthesis; ppGpp from GTP: step 2/2. Catalyzes the conversion of pppGpp to ppGpp. Guanosine pentaphosphate (pppGpp) is a cytoplasmic signaling molecule which together with ppGpp controls the 'stringent response', an adaptive process that allows bacteria to respond to amino acid starvation, resulting in the coordinated regulation of numerous cellular activities. The sequence is that of Guanosine-5'-triphosphate,3'-diphosphate pyrophosphatase from Salmonella dublin (strain CT_02021853).